A 338-amino-acid chain; its full sequence is tRNA N6-adenosine threonylcarbamoyltransferase (338 aa).

Histidine 111 and histidine 115 together coordinate Fe cation. Residues 134–138 (LVSGG), aspartate 167, glycine 180, and asparagine 272 each bind substrate. Aspartate 300 lines the Fe cation pocket.

Belongs to the KAE1 / TsaD family. It depends on Fe(2+) as a cofactor.

It is found in the cytoplasm. The enzyme catalyses L-threonylcarbamoyladenylate + adenosine(37) in tRNA = N(6)-L-threonylcarbamoyladenosine(37) in tRNA + AMP + H(+). Its function is as follows. Required for the formation of a threonylcarbamoyl group on adenosine at position 37 (t(6)A37) in tRNAs that read codons beginning with adenine. Is involved in the transfer of the threonylcarbamoyl moiety of threonylcarbamoyl-AMP (TC-AMP) to the N6 group of A37, together with TsaE and TsaB. TsaD likely plays a direct catalytic role in this reaction. This Shewanella pealeana (strain ATCC 700345 / ANG-SQ1) protein is tRNA N6-adenosine threonylcarbamoyltransferase.